We begin with the raw amino-acid sequence, 368 residues long: Forkhead box protein I2 (368 aa).

The tract at residues 33 to 54 (QNQQLPQRPAAPPALGYGRNEY) is disordered. The fork-head DNA-binding region spans 124–218 (RPPYSYSSLI…DNGNFRRKRK (95 aa)). The tract at residues 243 to 272 (SLGSDSPRGASALEQSSYGTPESKSRPAGG) is disordered. The segment covering 255-264 (LEQSSYGTPE) has biased composition (polar residues).

It is found in the nucleus. Its function is as follows. Possible transcriptional activator. This chain is Forkhead box protein I2, found in Xenopus tropicalis (Western clawed frog).